We begin with the raw amino-acid sequence, 551 residues long: PA-phosphatase related-family protein DDB_G0268928 (551 aa).

Polar residues-rich tracts occupy residues Thr26–Asp47 and Lys137–Lys152. Disordered regions lie at residues Thr26–Ser50 and Lys123–Asn172. Low complexity predominate over residues Thr153–Asn171. 7 helical membrane passes run Ser211 to Tyr231, Ser232 to Ile252, Leu273 to Leu293, Ile346 to Leu366, Met393 to Pro413, Ile474 to Met494, and Tyr500 to Phe520.

Belongs to the PA-phosphatase related phosphoesterase family.

The protein resides in the membrane. In Dictyostelium discoideum (Social amoeba), this protein is PA-phosphatase related-family protein DDB_G0268928.